The following is a 303-amino-acid chain: MTAIHSLTALDKAHVLADALPWLQKFRDKIVVVKYGGNAMIDEELKRAFAADMAFLRTVGVHPVVVHGGGPQISAMLKKLGLHGEFRGGFRVTTPEVMDVVRMVLFGQVGRELVGLINAHGPYAVGISGEDAGLFTATRRTVVVDGEPTDIGLVGDVTEVNPDAVLDLIGAGRIPVVSTIAPDADGVVHNINADTAAAALAEGIGAEKLVVLTDVEGLYTNWPDRSSLTSSIDAGALAELLPRLDAGMVPKMEACLRAVRGGVPTAHVIDGRVPHAVLLELFTGEGIGTMVTPSAASDGVVPA.

Substrate contacts are provided by residues 69–70 (GG), arginine 91, and asparagine 190.

This sequence belongs to the acetylglutamate kinase family. ArgB subfamily.

The protein resides in the cytoplasm. The catalysed reaction is N-acetyl-L-glutamate + ATP = N-acetyl-L-glutamyl 5-phosphate + ADP. The protein operates within amino-acid biosynthesis; L-arginine biosynthesis; N(2)-acetyl-L-ornithine from L-glutamate: step 2/4. In terms of biological role, catalyzes the ATP-dependent phosphorylation of N-acetyl-L-glutamate. This Nocardia farcinica (strain IFM 10152) protein is Acetylglutamate kinase.